The following is an 84-amino-acid chain: Mu-conotoxin-like Cal 12.2a (84 aa).

The first 19 residues, 1–19 (MKLTCVLVVLLLVLPFGDL), serve as a signal peptide directing secretion. Positions 20–42 (ITTSNTEDNKRGATPWQNSLKAR) are excised as a propeptide. Intrachain disulfides connect Cys45–Cys57, Cys52–Cys65, Cys59–Cys70, and Cys64–Cys76. Pro48 is modified (4-hydroxyproline). At Trp72 the chain carries 6'-bromotryptophan. Pro77 bears the 4-hydroxyproline mark. The residue at position 81 (Trp81) is a 6'-bromotryptophan.

The protein belongs to the conotoxin O1 superfamily. As to expression, expressed by the venom duct.

The protein localises to the secreted. Its function is as follows. Mu-conotoxins block voltage-gated sodium channels. This toxin reversibly blocks voltage-gated sodium channel in cephalopods, with no alteration in the voltage dependence of sodium conductance or on the kinetics of inactivation. The polypeptide is Mu-conotoxin-like Cal 12.2a (Californiconus californicus (California cone)).